A 93-amino-acid chain; its full sequence is DNA-binding protein HB1 (93 aa).

The protein belongs to the bacterial histone-like protein family. In terms of assembly, homodimer.

Functionally, histone-like DNA-binding protein which is capable of wrapping DNA to stabilize it, and thus to prevent its denaturation under extreme environmental conditions. The protein is DNA-binding protein HB1 (hup) of Bifidobacterium longum (strain NCC 2705).